The primary structure comprises 101 residues: Small ribosomal subunit protein bS18c (101 aa).

This sequence belongs to the bacterial ribosomal protein bS18 family. Part of the 30S ribosomal subunit.

The protein resides in the plastid. It localises to the chloroplast. The chain is Small ribosomal subunit protein bS18c from Lactuca sativa (Garden lettuce).